The sequence spans 200 residues: NAD(P)H dehydrogenase (quinone) (200 aa).

The Flavodoxin-like domain occupies 4 to 191 (VLVLYYSSYG…GGARYQGALV (188 aa)). FMN is bound by residues 10-15 (SSYGHI) and 79-81 (TRF). Tyr12 contacts NAD(+). Trp99 is a binding site for substrate. Residues 114 to 120 (STASQHG) and His135 contribute to the FMN site.

It belongs to the WrbA family. It depends on FMN as a cofactor.

It catalyses the reaction a quinone + NADH + H(+) = a quinol + NAD(+). The enzyme catalyses a quinone + NADPH + H(+) = a quinol + NADP(+). In Rhodospirillum centenum (strain ATCC 51521 / SW), this protein is NAD(P)H dehydrogenase (quinone).